The sequence spans 358 residues: E3 ubiquitin-protein ligase RNF146 (358 aa).

Residues 36–74 form an RING-type zinc finger; it reads CAICLQTCVHPVSLPCKHVFCYLCVKGASWLGKRCALCR. Glycyl lysine isopeptide (Lys-Gly) (interchain with G-Cter in ubiquitin) cross-links involve residues K84 and K94. The region spanning 91 to 167 is the WWE domain; sequence EELKAASRGN…EHGRRRKIKR (77 aa). The a glycoprotein site is built by Y107, R110, and W114. K130 is covalently cross-linked (Glycyl lysine isopeptide (Lys-Gly) (interchain with G-Cter in ubiquitin)). 4 residues coordinate a glycoprotein: Y144, Q153, R163, and K175. K175 participates in a covalent cross-link: Glycyl lysine isopeptide (Lys-Gly) (interchain with G-Cter in ubiquitin). A disordered region spans residues 253–358; that stretch reads GDNTAERSHR…PDGQCTVTEV (106 aa). Residues 283–297 show a composition bias toward acidic residues; sequence SIEETESDASSDSED. A phosphoserine mark is found at S289 and S293. A compositionally biased stretch (polar residues) spans 305-322; sequence HSLTQQRLLVSNANQTVP.

As to quaternary structure, can form homooligomers. Interacts with PARsylated AXIN1, AXIN2, BLZF1, CASC3, H1-2, IPO7, LIG3, NCL, PARP1, XRCC1, XRCC5 and XRCC6. Interacts with DDB1, DHX15, IQGAP1, LRPPRC, PARP2, PRKDC, RUVBL2, TNKS1 and TNKS2. Binding often leads to interactor ubiquitination, in the presence of the appropriate E1 and E2 enzymes, and proteasomal degradation. Ubiquitinated; autoubiquitinated. Autoubiquitination is enhanced upon poly(ADP-ribose)-binding.

Its subcellular location is the cytoplasm. The protein resides in the cytosol. It is found in the nucleus. It carries out the reaction S-ubiquitinyl-[E2 ubiquitin-conjugating enzyme]-L-cysteine + [acceptor protein]-L-lysine = [E2 ubiquitin-conjugating enzyme]-L-cysteine + N(6)-ubiquitinyl-[acceptor protein]-L-lysine.. It participates in protein modification; protein ubiquitination. Functionally, E3 ubiquitin-protein ligase that specifically binds poly-ADP-ribosylated (PARsylated) proteins and mediates their ubiquitination and subsequent degradation. May regulate many important biological processes, such as cell survival and DNA damage response. Acts as an activator of the Wnt signaling pathway by mediating the ubiquitination of PARsylated AXIN1 and AXIN2, 2 key components of the beta-catenin destruction complex. Acts in cooperation with tankyrase proteins (TNKS and TNKS2), which mediate PARsylation of target proteins AXIN1, AXIN2, BLZF1, CASC3, TNKS and TNKS2. Recognizes and binds tankyrase-dependent PARsylated proteins via its WWE domain and mediates their ubiquitination, leading to their degradation. Different ubiquitin linkage types have been observed: TNKS2 undergoes ubiquitination at 'Lys-48' and 'Lys-63', while AXIN1 is only ubiquitinated at 'Lys-48'. May regulate TNKS and TNKS2 subcellular location, preventing aggregation at a centrosomal location. Neuroprotective protein. Protects the brain against N-methyl-D-aspartate (NMDA) receptor-mediated glutamate excitotoxicity and ischemia, by interfering with PAR-induced cell death, called parthanatos. Prevents nuclear translocation of AIFM1 in a PAR-binding dependent manner. Does not affect PARP1 activation. Protects against cell death induced by DNA damaging agents, such as N-methyl-N-nitro-N-nitrosoguanidine (MNNG) and rescues cells from G1 arrest. Promotes cell survival after gamma-irradiation. Facilitates DNA repair. The polypeptide is E3 ubiquitin-protein ligase RNF146 (RNF146) (Pongo abelii (Sumatran orangutan)).